The primary structure comprises 630 residues: ATP synthase subunit alpha (630 aa).

173 to 180 (GDRQTGKT) is a binding site for ATP. A disordered region spans residues 592 to 630 (AGGASTAADEDGAGDDEEEAPAPKAKSKNAKSASKAKEK). Acidic residues predominate over residues 599 to 611 (ADEDGAGDDEEEA).

This sequence belongs to the ATPase alpha/beta chains family. In terms of assembly, F-type ATPases have 2 components, CF(1) - the catalytic core - and CF(0) - the membrane proton channel. CF(1) has five subunits: alpha(3), beta(3), gamma(1), delta(1), epsilon(1). CF(0) has three main subunits: a(1), b(2) and c(9-12). The alpha and beta chains form an alternating ring which encloses part of the gamma chain. CF(1) is attached to CF(0) by a central stalk formed by the gamma and epsilon chains, while a peripheral stalk is formed by the delta and b chains.

The protein resides in the cell inner membrane. It catalyses the reaction ATP + H2O + 4 H(+)(in) = ADP + phosphate + 5 H(+)(out). Functionally, produces ATP from ADP in the presence of a proton gradient across the membrane. The alpha chain is a regulatory subunit. This Sorangium cellulosum (strain So ce56) (Polyangium cellulosum (strain So ce56)) protein is ATP synthase subunit alpha.